Consider the following 500-residue polypeptide: uncharacterized protein (500 aa).

Residues 1–13 (MEPSQRSGSFSSI) are compositionally biased toward low complexity. The tract at residues 1–23 (MEPSQRSGSFSSISRRRSRVDSR) is disordered. Residue S9 is modified to Phosphoserine. 12 helical membrane-spanning segments follow: residues 87-107 (VSIA…AVAL), 126-146 (LVIG…LCFA), 156-176 (LYFR…LLYC), 183-203 (WIYL…TFLY), 225-245 (MNIL…GILA), 261-281 (VASW…IFFF), 312-332 (FLLF…NGYQ), 351-371 (GNFI…SSFL), 380-400 (IMLG…VLDA), 408-428 (VYFF…APLI), 445-465 (IVVQ…GGAI), and 471-491 (VGFI…LIFM).

Belongs to the major facilitator superfamily.

The protein localises to the golgi apparatus. The protein resides in the membrane. This is an uncharacterized protein from Schizosaccharomyces pombe (strain 972 / ATCC 24843) (Fission yeast).